Here is a 637-residue protein sequence, read N- to C-terminus: Pyrethroid hydrolase (637 aa).

It carries out the reaction (-)-trans-permethrin + H2O = (3-phenoxyphenyl)methanol + (1S,3R)-3-(2,2-dichlorovinyl)-2,2-dimethylcyclopropanecarboxylate + H(+). Its activity is regulated as follows. Inhibited by Hg(2+), Ag(+) and rho-chloromercuribenzoate. Catalyzes the hydrolysis of pyrethroids pesticides. Hydrolyzes cis-permethrin at approximately equal rate to trans-permethrin. In Klebsiella sp, this protein is Pyrethroid hydrolase (estP).